A 509-amino-acid chain; its full sequence is ATP synthase subunit alpha (509 aa).

Residue glycine 169–threonine 176 participates in ATP binding.

This sequence belongs to the ATPase alpha/beta chains family. F-type ATPases have 2 components, CF(1) - the catalytic core - and CF(0) - the membrane proton channel. CF(1) has five subunits: alpha(3), beta(3), gamma(1), delta(1), epsilon(1). CF(0) has three main subunits: a(1), b(2) and c(9-12). The alpha and beta chains form an alternating ring which encloses part of the gamma chain. CF(1) is attached to CF(0) by a central stalk formed by the gamma and epsilon chains, while a peripheral stalk is formed by the delta and b chains.

The protein localises to the cell inner membrane. The catalysed reaction is ATP + H2O + 4 H(+)(in) = ADP + phosphate + 5 H(+)(out). Its function is as follows. Produces ATP from ADP in the presence of a proton gradient across the membrane. The alpha chain is a regulatory subunit. The polypeptide is ATP synthase subunit alpha (Bradyrhizobium diazoefficiens (strain JCM 10833 / BCRC 13528 / IAM 13628 / NBRC 14792 / USDA 110)).